Reading from the N-terminus, the 300-residue chain is Protein ARMCX6 (300 aa).

The Mitochondrial intermembrane portion of the chain corresponds to 1–6; it reads MGRARE. Mitochondrion outer membrane (MOM)-targeting sequence regions lie at residues 1–6 and 26–36; these read MGRARE and KLTIGRDDSEK. The chain crosses the membrane as a helical; Signal-anchor span at residues 7–27; it reads VGWMAAGLMIGAGACYCVYKL. Topologically, residues 28–300 are cytoplasmic; sequence TIGRDDSEKL…REILLETPAP (273 aa). Disordered stretches follow at residues 35 to 54 and 69 to 99; these read EKLE…LDEE and WTED…RAHP.

This sequence belongs to the eutherian X-chromosome-specific Armcx family.

It is found in the mitochondrion. It localises to the mitochondrion outer membrane. In terms of biological role, may regulate the dynamics and distribution of mitochondria in neural cells. The polypeptide is Protein ARMCX6 (ARMCX6) (Homo sapiens (Human)).